Here is a 38-residue protein sequence, read N- to C-terminus: Photosystem II reaction center protein L (38 aa).

Residues 17–37 (SLYWGLLLIFVLAVLFSNYFF) form a helical membrane-spanning segment.

Belongs to the PsbL family. As to quaternary structure, PSII is composed of 1 copy each of membrane proteins PsbA, PsbB, PsbC, PsbD, PsbE, PsbF, PsbH, PsbI, PsbJ, PsbK, PsbL, PsbM, PsbT, PsbX, PsbY, PsbZ, Psb30/Ycf12, at least 3 peripheral proteins of the oxygen-evolving complex and a large number of cofactors. It forms dimeric complexes.

The protein resides in the plastid. It localises to the chloroplast thylakoid membrane. Functionally, one of the components of the core complex of photosystem II (PSII). PSII is a light-driven water:plastoquinone oxidoreductase that uses light energy to abstract electrons from H(2)O, generating O(2) and a proton gradient subsequently used for ATP formation. It consists of a core antenna complex that captures photons, and an electron transfer chain that converts photonic excitation into a charge separation. This subunit is found at the monomer-monomer interface and is required for correct PSII assembly and/or dimerization. The sequence is that of Photosystem II reaction center protein L from Oenothera argillicola (Appalachian evening primrose).